Consider the following 174-residue polypeptide: Transcriptional repressor NrdR (174 aa).

The segment at 3 to 34 (CPFCQHSDTRVIDSRVSEDGTTIRRRRECEAC) is a zinc-finger region. The region spanning 49–139 (PTVVKSDGGR…VYRSFQDVAD (91 aa)) is the ATP-cone domain.

It belongs to the NrdR family. Zn(2+) serves as cofactor.

Its function is as follows. Negatively regulates transcription of bacterial ribonucleotide reductase nrd genes and operons by binding to NrdR-boxes. This Xanthomonas oryzae pv. oryzae (strain MAFF 311018) protein is Transcriptional repressor NrdR.